The sequence spans 281 residues: Small ribosomal subunit protein uS2 (281 aa).

Residues 233 to 281 (NKAEGEAAEQPMAAWEKELLTNEAPAEASAEAAAPAAAEGETAEAPKAE) form a disordered region. Residues 255 to 275 (EAPAEASAEAAAPAAAEGETA) are compositionally biased toward low complexity.

This sequence belongs to the universal ribosomal protein uS2 family.

This Bifidobacterium longum (strain DJO10A) protein is Small ribosomal subunit protein uS2.